The sequence spans 806 residues: Leucine--tRNA ligase (806 aa).

Residues 38 to 48 carry the 'HIGH' region motif; the sequence is PYPSGEIHMGH. Residues 572-576 carry the 'KMSKS' region motif; the sequence is KMSKS. Lys-575 lines the ATP pocket.

Belongs to the class-I aminoacyl-tRNA synthetase family.

The protein resides in the cytoplasm. The enzyme catalyses tRNA(Leu) + L-leucine + ATP = L-leucyl-tRNA(Leu) + AMP + diphosphate. The sequence is that of Leucine--tRNA ligase from Helicobacter pylori (strain ATCC 700392 / 26695) (Campylobacter pylori).